We begin with the raw amino-acid sequence, 303 residues long: Uridine diphosphate glucose pyrophosphatase NUDT22 (303 aa).

Residues phenylalanine 56, tyrosine 87, arginine 139, alanine 144, aspartate 151, histidine 156, and glutamate 158 each coordinate substrate. Residues alanine 118–valine 285 enclose the Nudix hydrolase domain. The disordered stretch occupies residues glycine 148–proline 168. Residues glycine 175–leucine 196 carry the Nudix box motif. Mg(2+)-binding residues include glutamate 189 and glutamate 193. Serine 274 contacts substrate.

It belongs to the Nudix hydrolase family. Requires Mg(2+) as cofactor.

It catalyses the reaction UDP-sugar + H2O = UMP + alpha-D-aldose 1-phosphate.. Its function is as follows. Hydrolyzes UDP-glucose to glucose 1-phosphate and UMP and UDP-galactose to galactose 1-phosphate and UMP. Preferred substrate is UDP-glucose. The polypeptide is Uridine diphosphate glucose pyrophosphatase NUDT22 (NUDT22) (Homo sapiens (Human)).